A 648-amino-acid chain; its full sequence is Threonine--tRNA ligase (648 aa).

The region spanning 1-63 (MAQISLTFPD…HADATIAIHT (63 aa)) is the TGS domain. Residues 247–544 (DHRKLGREMD…LIENSAGKLP (298 aa)) form a catalytic region. Cys344, His395, and His521 together coordinate Zn(2+).

The protein belongs to the class-II aminoacyl-tRNA synthetase family. As to quaternary structure, homodimer. Requires Zn(2+) as cofactor.

The protein resides in the cytoplasm. The catalysed reaction is tRNA(Thr) + L-threonine + ATP = L-threonyl-tRNA(Thr) + AMP + diphosphate + H(+). Catalyzes the attachment of threonine to tRNA(Thr) in a two-step reaction: L-threonine is first activated by ATP to form Thr-AMP and then transferred to the acceptor end of tRNA(Thr). Also edits incorrectly charged L-seryl-tRNA(Thr). This chain is Threonine--tRNA ligase, found in Roseobacter denitrificans (strain ATCC 33942 / OCh 114) (Erythrobacter sp. (strain OCh 114)).